A 339-amino-acid polypeptide reads, in one-letter code: Methionine import ATP-binding protein MetN 2 (339 aa).

Residues 2-241 (ISFNNVSKVY…PKTKTTQNFV (240 aa)) form the ABC transporter domain. 38 to 45 (GFSGAGKS) is an ATP binding site.

It belongs to the ABC transporter superfamily. Methionine importer (TC 3.A.1.24) family. As to quaternary structure, the complex is composed of two ATP-binding proteins (MetN), two transmembrane proteins (MetI) and a solute-binding protein (MetQ).

It is found in the cell membrane. The catalysed reaction is L-methionine(out) + ATP + H2O = L-methionine(in) + ADP + phosphate + H(+). It catalyses the reaction D-methionine(out) + ATP + H2O = D-methionine(in) + ADP + phosphate + H(+). Its function is as follows. Part of the ABC transporter complex MetNIQ involved in methionine import. Responsible for energy coupling to the transport system. The polypeptide is Methionine import ATP-binding protein MetN 2 (Bacillus cereus (strain ZK / E33L)).